We begin with the raw amino-acid sequence, 336 residues long: Small ribosomal subunit protein uS2 (336 aa).

This sequence belongs to the universal ribosomal protein uS2 family.

This Beijerinckia indica subsp. indica (strain ATCC 9039 / DSM 1715 / NCIMB 8712) protein is Small ribosomal subunit protein uS2.